Consider the following 310-residue polypeptide: Iron ABC transporter substrate-binding lipoprotein MtsA (310 aa).

Positions 1–20 are cleaved as a signal peptide; that stretch reads MGKKMSLILGAFLSVFLLVA. C21 is lipidated: N-palmitoyl cysteine. C21 carries the S-diacylglycerol cysteine lipid modification. Residues H68, H140, E206, and D281 each contribute to the Fe(2+) site.

This sequence belongs to the bacterial solute-binding protein 9 family. Lipoprotein receptor antigen (Lrai) subfamily.

It is found in the cell membrane. Part of the ATP-binding cassette (ABC) transport system MtsABC involved in iron import. Binds iron with high affinity and specificity and delivers it to the membrane permease for translocation into the cytoplasm. Has low affinity for Zn(2+) and Cu(2+). The protein is Iron ABC transporter substrate-binding lipoprotein MtsA (mtsA) of Streptococcus pyogenes serotype M6 (strain ATCC BAA-946 / MGAS10394).